We begin with the raw amino-acid sequence, 316 residues long: Glutathione synthetase (316 aa).

The 186-residue stretch at 125–310 (KLFTAWFSDL…ITGMLMDAIE (186 aa)) folds into the ATP-grasp domain. 151–207 (WEKHSDIILKPLDGMGGASIFRVKEGDPNLGVIAETLTEHGTRYCMAQNYLPAIKDG) provides a ligand contact to ATP. Positions 281 and 283 each coordinate Mg(2+).

Belongs to the prokaryotic GSH synthase family. As to quaternary structure, homotetramer. Mg(2+) is required as a cofactor. The cofactor is Mn(2+).

The enzyme catalyses gamma-L-glutamyl-L-cysteine + glycine + ATP = glutathione + ADP + phosphate + H(+). Its pathway is sulfur metabolism; glutathione biosynthesis; glutathione from L-cysteine and L-glutamate: step 2/2. Its activity is regulated as follows. Inhibited by 7,8-dihydrofolate, methotrexate and trimethoprim. The protein is Glutathione synthetase (gshB) of Escherichia coli (strain K12).